Consider the following 160-residue polypeptide: Ribosomal RNA large subunit methyltransferase H (160 aa).

The S-adenosyl-L-methionine site is built by leucine 76 and glycine 108.

This sequence belongs to the RNA methyltransferase RlmH family. In terms of assembly, homodimer.

It is found in the cytoplasm. The enzyme catalyses pseudouridine(1915) in 23S rRNA + S-adenosyl-L-methionine = N(3)-methylpseudouridine(1915) in 23S rRNA + S-adenosyl-L-homocysteine + H(+). Specifically methylates the pseudouridine at position 1915 (m3Psi1915) in 23S rRNA. The polypeptide is Ribosomal RNA large subunit methyltransferase H (Nitrobacter hamburgensis (strain DSM 10229 / NCIMB 13809 / X14)).